A 465-amino-acid chain; its full sequence is MNKLSCGRKSRVEGGQLAGDEWTRHGSFVNKPTRGWLHPDDKVMGPGVPYLVRYMGCVEVLQSMRALDFNTRTQVTREAISLVCDAVPGAKGAMRRRKTCGRSLNSILGKSNLKFAGMPITLTVSTSSLNLMASDCKQIIANHHMQSISFASGGDPDTAEYVAYVAKDPVNQRACHILECPEGLAQDVISTIGQAFELRFKQYLKNPPKLVTPHDRMAGFDGSAWDEEEEELPDHAYYNDFPGKEPPIGGVVDMRLRDGAAPAVLRQSPNHMGATLPVGQVSGAEQDSRKMQPTLQGRERFPVPCSRPPNRPDLFDDPSYVNVQNLEKSRQPLRAANGQRDIFDMKPFDDALPSAQAIVSMEDQLKREPWYQGKMSRKEAERLLKVNGDFLVRESTTTPGQYVLTGLQCGQPKHLLLVDPEGVVRTKDHRFESVSHLISYHMDNHLPIISAGSELCLQQPVERRQ.

A PID domain is found at 44 to 227; sequence MGPGVPYLVR…AGFDGSAWDE (184 aa). The tract at residues 228–369 is CH1; it reads EEEELPDHAY…SMEDQLKREP (142 aa). Residues 281 to 315 are disordered; that stretch reads VSGAEQDSRKMQPTLQGRERFPVPCSRPPNRPDLF. One can recognise an SH2 domain in the interval 370-461; it reads WYQGKMSRKE…GSELCLQQPV (92 aa).

As to quaternary structure, interacts with grb2. Highly expressed in oocytes and embryo. Also expressed in liver. Detected in ovary, testis and heart and to a lesser extent in liver (at protein level).

Its subcellular location is the cytoplasm. Functionally, implicated in ras-dependent oocyte maturation induced by insulin/IGF1. The chain is SHC-transforming protein 1 (shc1) from Xenopus laevis (African clawed frog).